The sequence spans 219 residues: Leucyl/phenylalanyl-tRNA--protein transferase (219 aa).

It belongs to the L/F-transferase family.

It is found in the cytoplasm. It carries out the reaction N-terminal L-lysyl-[protein] + L-leucyl-tRNA(Leu) = N-terminal L-leucyl-L-lysyl-[protein] + tRNA(Leu) + H(+). The enzyme catalyses N-terminal L-arginyl-[protein] + L-leucyl-tRNA(Leu) = N-terminal L-leucyl-L-arginyl-[protein] + tRNA(Leu) + H(+). The catalysed reaction is L-phenylalanyl-tRNA(Phe) + an N-terminal L-alpha-aminoacyl-[protein] = an N-terminal L-phenylalanyl-L-alpha-aminoacyl-[protein] + tRNA(Phe). Its function is as follows. Functions in the N-end rule pathway of protein degradation where it conjugates Leu, Phe and, less efficiently, Met from aminoacyl-tRNAs to the N-termini of proteins containing an N-terminal arginine or lysine. The polypeptide is Leucyl/phenylalanyl-tRNA--protein transferase (Leptospira interrogans serogroup Icterohaemorrhagiae serovar copenhageni (strain Fiocruz L1-130)).